Consider the following 840-residue polypeptide: Protein translocase subunit SecA (840 aa).

ATP is bound by residues glutamine 85, 103–107 (GEGKT), and aspartate 492. Residues 787 to 822 (QRERVAKETGASHGGDSQEVKKKPVKKEPKVGRNDL) are disordered. The span at 802–819 (DSQEVKKKPVKKEPKVGR) shows a compositional bias: basic and acidic residues. Residues cysteine 823, cysteine 825, cysteine 834, and cysteine 835 each coordinate Zn(2+).

It belongs to the SecA family. As to quaternary structure, monomer and homodimer. Part of the essential Sec protein translocation apparatus which comprises SecA, SecYEG and auxiliary proteins SecDF. Other proteins may also be involved. Requires Zn(2+) as cofactor.

Its subcellular location is the cell membrane. The protein resides in the cytoplasm. The enzyme catalyses ATP + H2O + cellular proteinSide 1 = ADP + phosphate + cellular proteinSide 2.. Its function is as follows. Part of the Sec protein translocase complex. Interacts with the SecYEG preprotein conducting channel. Has a central role in coupling the hydrolysis of ATP to the transfer of proteins into and across the cell membrane, serving as an ATP-driven molecular motor driving the stepwise translocation of polypeptide chains across the membrane. This chain is Protein translocase subunit SecA, found in Clostridium perfringens (strain ATCC 13124 / DSM 756 / JCM 1290 / NCIMB 6125 / NCTC 8237 / Type A).